A 294-amino-acid chain; its full sequence is Shikimate dehydrogenase (NADP(+)) (294 aa).

Shikimate-binding positions include 25–27 and T72; that span reads SAS. Catalysis depends on K76, which acts as the Proton acceptor. Positions 97 and 112 each coordinate shikimate. NADP(+)-binding positions include 136–140 and T234; that span reads GAGGA. Y236 lines the shikimate pocket. An NADP(+)-binding site is contributed by G257.

Belongs to the shikimate dehydrogenase family. In terms of assembly, homodimer.

It carries out the reaction shikimate + NADP(+) = 3-dehydroshikimate + NADPH + H(+). Its pathway is metabolic intermediate biosynthesis; chorismate biosynthesis; chorismate from D-erythrose 4-phosphate and phosphoenolpyruvate: step 4/7. In terms of biological role, involved in the biosynthesis of the chorismate, which leads to the biosynthesis of aromatic amino acids. Catalyzes the reversible NADPH linked reduction of 3-dehydroshikimate (DHSA) to yield shikimate (SA). This Symbiobacterium thermophilum (strain DSM 24528 / JCM 14929 / IAM 14863 / T) protein is Shikimate dehydrogenase (NADP(+)).